The following is a 372-amino-acid chain: Cytochrome b (372 aa).

The next 4 helical transmembrane spans lie at 25 to 45 (FGSM…FLAI), 69 to 90 (WIMQ…YIHI), 105 to 125 (WLSG…GYVL), and 170 to 190 (FFAL…IHIM). Residues histidine 75 and histidine 89 each coordinate heme b. Positions 174 and 188 each coordinate heme b. Histidine 193 is an a ubiquinone binding site. 4 helical membrane-spanning segments follow: residues 218–238 (HKDI…MTLT), 280–300 (LGGT…PFTH), 312–332 (LTQL…WAAT), and 339–358 (FTMI…IMNP).

It belongs to the cytochrome b family. The cytochrome bc1 complex contains 3 respiratory subunits (MT-CYB, CYC1 and UQCRFS1), 2 core proteins (UQCRC1 and UQCRC2) and probably 6 low-molecular weight proteins. It depends on heme b as a cofactor.

It localises to the mitochondrion inner membrane. In terms of biological role, component of the ubiquinol-cytochrome c reductase complex (complex III or cytochrome b-c1 complex) that is part of the mitochondrial respiratory chain. The b-c1 complex mediates electron transfer from ubiquinol to cytochrome c. Contributes to the generation of a proton gradient across the mitochondrial membrane that is then used for ATP synthesis. In Lycodon semicarinatus (Ryukyu odd-tooth snake), this protein is Cytochrome b (MT-CYB).